The following is a 279-amino-acid chain: Cytochrome c1 (279 aa).

A signal peptide spans 1–21 (MKKLLISAVSALVLGSGAAFA). Heme c contacts are provided by Cys55, Cys58, His59, and Met204. The chain crosses the membrane as a helical span at residues 248–266 (MGLVAMVMLGLLSVMLYLT).

In terms of assembly, the main subunits of complex b-c1 are: cytochrome b, cytochrome c1 and the Rieske protein. In terms of processing, binds 1 heme c group covalently per subunit.

It localises to the cell membrane. Component of the ubiquinol-cytochrome c reductase complex (complex III or cytochrome b-c1 complex), which is a respiratory chain that generates an electrochemical potential coupled to ATP synthesis. c1 functions as an electron donor to cytochrome c. The protein is Cytochrome c1 (petC) of Rhodobacter capsulatus (strain ATCC BAA-309 / NBRC 16581 / SB1003).